The primary structure comprises 331 residues: Phosphate acyltransferase (331 aa).

Belongs to the PlsX family. In terms of assembly, homodimer. Probably interacts with PlsY.

The protein resides in the cytoplasm. The catalysed reaction is a fatty acyl-[ACP] + phosphate = an acyl phosphate + holo-[ACP]. It functions in the pathway lipid metabolism; phospholipid metabolism. Catalyzes the reversible formation of acyl-phosphate (acyl-PO(4)) from acyl-[acyl-carrier-protein] (acyl-ACP). This enzyme utilizes acyl-ACP as fatty acyl donor, but not acyl-CoA. The chain is Phosphate acyltransferase from Wolinella succinogenes (strain ATCC 29543 / DSM 1740 / CCUG 13145 / JCM 31913 / LMG 7466 / NCTC 11488 / FDC 602W) (Vibrio succinogenes).